The following is a 65-amino-acid chain: Beta-toxin Tf4a (65 aa).

An LCN-type CS-alpha/beta domain is found at 2–63 (KEGYPADSKG…VWDSATNKCG (62 aa)). Intrachain disulfides connect Cys-12–Cys-62, Cys-16–Cys-38, Cys-24–Cys-43, and Cys-28–Cys-45. Cys-62 is modified (cysteine amide).

Belongs to the long (4 C-C) scorpion toxin superfamily. Sodium channel inhibitor family. Alpha subfamily. As to expression, expressed by the venom gland.

The protein localises to the secreted. Alpha toxins bind voltage-independently at site-3 of sodium channels (Nav) and inhibit the inactivation of the activated channels, thereby blocking neuronal transmission. This toxin is toxic to frogs but non-toxic to insect larvae (T.molitor), mammals (rats) and crustaceans (crabs) at the doses assayed. The polypeptide is Beta-toxin Tf4a (Tityus fasciolatus (Central Brazilian scorpion)).